The sequence spans 205 residues: MSVMSYNGGAVMAMKGKNCVAIAADRRFGIQAQMVTTDFQKIFPMGDRLYIGLAGLATDVQTVAQRLKFRLNLYELKEGRQIKPYTLMSMVANLLYEKRFGPYYTEPVIAGLDPKTFKPFICSLDLIGCPMVTDDFVVSGTCSEQMYGMCESLWEPNMDPEHLFETISQAMLNAVDRDAVSGMGVIVHIIEKDKITTRTLKARMD.

Position 2 is an N-acetylserine (Ser-2). Lys-77 is subject to N6-acetyllysine.

This sequence belongs to the peptidase T1B family. As to quaternary structure, the 26S proteasome consists of a 20S proteasome core and two 19S regulatory subunits. The 20S proteasome core is a barrel-shaped complex made of 28 subunits that are arranged in four stacked rings. The two outer rings are each formed by seven alpha subunits, and the two inner rings are formed by seven beta subunits. The proteolytic activity is exerted by three beta-subunits PSMB5, PSMB6 and PSMB7.

The protein resides in the cytoplasm. Its subcellular location is the nucleus. Non-catalytic component of the 20S core proteasome complex involved in the proteolytic degradation of most intracellular proteins. This complex plays numerous essential roles within the cell by associating with different regulatory particles. Associated with two 19S regulatory particles, forms the 26S proteasome and thus participates in the ATP-dependent degradation of ubiquitinated proteins. The 26S proteasome plays a key role in the maintenance of protein homeostasis by removing misfolded or damaged proteins that could impair cellular functions, and by removing proteins whose functions are no longer required. Associated with the PA200 or PA28, the 20S proteasome mediates ubiquitin-independent protein degradation. This type of proteolysis is required in several pathways including spermatogenesis (20S-PA200 complex) or generation of a subset of MHC class I-presented antigenic peptides (20S-PA28 complex). The chain is Proteasome subunit beta type-3 (Psmb3) from Rattus norvegicus (Rat).